Here is a 307-residue protein sequence, read N- to C-terminus: Ornithine carbamoyltransferase (307 aa).

Carbamoyl phosphate contacts are provided by residues 56–59 (STRT), Q83, R107, and 134–137 (HPCQ). Residues N165, D223, and 227 to 228 (SM) contribute to the L-ornithine site. Carbamoyl phosphate is bound by residues 263 to 264 (CL) and R291.

Belongs to the aspartate/ornithine carbamoyltransferase superfamily. OTCase family.

It is found in the cytoplasm. The catalysed reaction is carbamoyl phosphate + L-ornithine = L-citrulline + phosphate + H(+). Its pathway is amino-acid biosynthesis; L-arginine biosynthesis; L-arginine from L-ornithine and carbamoyl phosphate: step 1/3. Functionally, reversibly catalyzes the transfer of the carbamoyl group from carbamoyl phosphate (CP) to the N(epsilon) atom of ornithine (ORN) to produce L-citrulline. The sequence is that of Ornithine carbamoyltransferase from Cupriavidus pinatubonensis (strain JMP 134 / LMG 1197) (Cupriavidus necator (strain JMP 134)).